A 432-amino-acid chain; its full sequence is Transcriptional adapter 3 (432 aa).

Lys21 is covalently cross-linked (Glycyl lysine isopeptide (Lys-Gly) (interchain with G-Cter in SUMO2)). Residues 40–69 (IEELDTLQLELETLLSSASRRLRVLEAETQ) are a coiled coil. The segment at 87–127 (ARDHELGAPPKHGKPKKQKLEGKTGHGPGPGPGRPKSKNVQ) is disordered. A Glycyl lysine isopeptide (Lys-Gly) (interchain with G-Cter in SUMO2) cross-link involves residue Lys129. Residues 272-319 (NIISPMEDSPIPDMSGKESGADGASTSPRNQNKPFSVPHTKSLESRIK) form a disordered region. A phosphoserine mark is found at Ser280 and Ser298. The span at 295 to 305 (ASTSPRNQNKP) shows a compositional bias: polar residues. Residues 367 to 407 (LLRLAKEEVSRQELRQRVRMADNEVMDAFRKIMAARQKKRT) are a coiled coil. N6-acetyllysine is present on Lys418.

The protein belongs to the NGG1 family. The PCAF complex is composed of a number of TBP-associated factors (TAFS), such as TAF5, TAF5L, TAF6, TAF6L, TAF9, TAF10 and TAF12, PCAF, and also PCAF-associated factors (PAFs), such as TADA2L/ADA2, TADA3L/ADA3 and SPT3. Interacts directly with TADA2L and PCAF and also with the high-risk HPV oncoprotein E6. Component of the STAGA transcription coactivator-HAT complex, at least composed of SUPT3H, GCN5L2, TAF5L, TAF6L, SUPT7L, TADA3L, TAD1L, TAF10, TAF12, TRRAP and TAF9. Component of the TFTC-HAT complex. Component of the ADA2A-containing complex (ATAC), composed of KAT14, KAT2A, TADA2L, TADA3L, ZZ3, MBIP, WDR5, YEATS2, CCDC101 and DR1.

It is found in the nucleus. In terms of biological role, functions as a component of the PCAF complex. The PCAF complex is capable of efficiently acetylating histones in a nucleosomal context. The PCAF complex could be considered as the human version of the yeast SAGA complex. Also known as a coactivator for p53/TP53-dependent transcriptional activation. Component of the ATAC complex, a complex with histone acetyltransferase activity on histones H3 and H4. The polypeptide is Transcriptional adapter 3 (Tada3) (Rattus norvegicus (Rat)).